We begin with the raw amino-acid sequence, 380 residues long: Cytochrome b (380 aa).

The next 4 membrane-spanning stretches (helical) occupy residues 34–54 (FGSLLGLCLIIQILTGLFLAM), 78–99 (WLIRNTHANGASMFFICVYLHI), 114–134 (WNIGVIILLLLMATAFVGYVL), and 179–199 (FFTFHFLLPFVIVALTMVHLL). Heme b-binding residues include histidine 84 and histidine 98. Positions 183 and 197 each coordinate heme b. Residue histidine 202 coordinates a ubiquinone. The next 4 membrane-spanning stretches (helical) occupy residues 227–247 (YKDLLGFFILLFFLTFLALFT), 289–309 (LGGVLALAFSILILLLVPILH), 321–341 (ISQLLFWLLVANTIILTWIGG), and 348–368 (FITIGQIASITYFSFFLILFP).

It belongs to the cytochrome b family. The cytochrome bc1 complex contains 3 respiratory subunits (MT-CYB, CYC1 and UQCRFS1), 2 core proteins (UQCRC1 and UQCRC2) and probably 6 low-molecular weight proteins. Heme b is required as a cofactor.

It localises to the mitochondrion inner membrane. Functionally, component of the ubiquinol-cytochrome c reductase complex (complex III or cytochrome b-c1 complex) that is part of the mitochondrial respiratory chain. The b-c1 complex mediates electron transfer from ubiquinol to cytochrome c. Contributes to the generation of a proton gradient across the mitochondrial membrane that is then used for ATP synthesis. This Pastinachus sephen (Cowtail stingray) protein is Cytochrome b (mt-cyb).